A 1093-amino-acid polypeptide reads, in one-letter code: Protein translocase subunit SecA (1093 aa).

ATP contacts are provided by residues Q84, 102–106 (GEGKT), and D491. Disordered stretches follow at residues 837–869 (QNLQEQSYKDPASDNLENNPEPKTGSQSQSEHE) and 904–1062 (SELE…TSEA). Composition is skewed to basic and acidic residues over residues 904–937 (SELESKEKEQEEVKNQETQPKENKPAETKVDATK), 944–971 (EELKAKEVATVVEEKPKKVSKAKSEKLK), and 978–1062 (PKDL…TSEA).

This sequence belongs to the SecA family. In terms of assembly, monomer and homodimer. Part of the essential Sec protein translocation apparatus which comprises SecA, SecYEG and auxiliary proteins SecDF. Other proteins may also be involved.

Its subcellular location is the cell membrane. It is found in the cytoplasm. The catalysed reaction is ATP + H2O + cellular proteinSide 1 = ADP + phosphate + cellular proteinSide 2.. Functionally, part of the Sec protein translocase complex. Interacts with the SecYEG preprotein conducting channel. Has a central role in coupling the hydrolysis of ATP to the transfer of proteins into and across the cell membrane, serving as an ATP-driven molecular motor driving the stepwise translocation of polypeptide chains across the membrane. The sequence is that of Protein translocase subunit SecA from Mycoplasmopsis synoviae (strain 53) (Mycoplasma synoviae).